The sequence spans 417 residues: Gamma-glutamyl phosphate reductase (417 aa).

The protein belongs to the gamma-glutamyl phosphate reductase family.

It localises to the cytoplasm. It catalyses the reaction L-glutamate 5-semialdehyde + phosphate + NADP(+) = L-glutamyl 5-phosphate + NADPH + H(+). The protein operates within amino-acid biosynthesis; L-proline biosynthesis; L-glutamate 5-semialdehyde from L-glutamate: step 2/2. Its function is as follows. Catalyzes the NADPH-dependent reduction of L-glutamate 5-phosphate into L-glutamate 5-semialdehyde and phosphate. The product spontaneously undergoes cyclization to form 1-pyrroline-5-carboxylate. In Escherichia coli (strain 55989 / EAEC), this protein is Gamma-glutamyl phosphate reductase.